Here is a 350-residue protein sequence, read N- to C-terminus: Biotin synthase (350 aa).

In terms of domain architecture, Radical SAM core spans Asn41 to Arg268. Cys56, Cys60, and Cys63 together coordinate [4Fe-4S] cluster. The [2Fe-2S] cluster site is built by Cys100, Cys131, Cys191, and Arg263.

This sequence belongs to the radical SAM superfamily. Biotin synthase family. In terms of assembly, homodimer. It depends on [4Fe-4S] cluster as a cofactor. Requires [2Fe-2S] cluster as cofactor.

The enzyme catalyses (4R,5S)-dethiobiotin + (sulfur carrier)-SH + 2 reduced [2Fe-2S]-[ferredoxin] + 2 S-adenosyl-L-methionine = (sulfur carrier)-H + biotin + 2 5'-deoxyadenosine + 2 L-methionine + 2 oxidized [2Fe-2S]-[ferredoxin]. The protein operates within cofactor biosynthesis; biotin biosynthesis; biotin from 7,8-diaminononanoate: step 2/2. Catalyzes the conversion of dethiobiotin (DTB) to biotin by the insertion of a sulfur atom into dethiobiotin via a radical-based mechanism. This Shewanella piezotolerans (strain WP3 / JCM 13877) protein is Biotin synthase.